Consider the following 461-residue polypeptide: Cysteine--tRNA ligase (461 aa).

Cys28 is a binding site for Zn(2+). Positions 30 to 40 match the 'HIGH' region motif; that stretch reads ITIYDLCHIGH. The Zn(2+) site is built by Cys209, His234, and Glu238. The 'KMSKS' region signature appears at 266-270; sequence KMSKS. Lys269 lines the ATP pocket.

It belongs to the class-I aminoacyl-tRNA synthetase family. Monomer. Zn(2+) is required as a cofactor.

It is found in the cytoplasm. It catalyses the reaction tRNA(Cys) + L-cysteine + ATP = L-cysteinyl-tRNA(Cys) + AMP + diphosphate. This chain is Cysteine--tRNA ligase, found in Yersinia pseudotuberculosis serotype IB (strain PB1/+).